Reading from the N-terminus, the 346-residue chain is GPALPP motifs-containing protein 1 (346 aa).

2 disordered regions span residues 1–283 (MARD…ESLM) and 289–308 (KLKS…IPFD). The residue at position 2 (Ala2) is an N-acetylalanine. Positions 7–12 (GPALPP) match the GPALPP motif 1 motif. Ser28 carries the post-translational modification Phosphoserine. A GPALPP motif 2 motif is present at residues 32–37 (GPALPP). Residues 60–69 (GNQESEEEDT) are compositionally biased toward acidic residues. The short motif at 91–96 (GPALPP) is the GPALPP motif 3 element. Ser104 is subject to Phosphoserine. Residues 106 to 115 (PRPIIGPALP) are compositionally biased toward pro residues. Positions 111-116 (GPALPP) match the GPALPP motif 4 motif. Positions 123-132 (QKNDKGREDP) are enriched in basic and acidic residues. Phosphoserine is present on residues Ser136, Ser141, and Ser146. The segment covering 142–152 (EEAESGEDEDI) has biased composition (acidic residues). Composition is skewed to basic and acidic residues over residues 169 to 193 (EFEK…KPIT) and 233 to 267 (PADR…KRLA). A Glycyl lysine isopeptide (Lys-Gly) (interchain with G-Cter in SUMO2) cross-link involves residue Lys277. Residues 293-308 (KAAEDKNKHQERIPFD) are compositionally biased toward basic and acidic residues. Lys314 participates in a covalent cross-link: Glycyl lysine isopeptide (Lys-Gly) (interchain with G-Cter in SUMO2).

This Mus musculus (Mouse) protein is GPALPP motifs-containing protein 1 (Gpalpp1).